The primary structure comprises 81 residues: Protein L83L (81 aa).

The tract at residues 1 to 28 (MDTSLKNNDGALDADNKNYQDYKDEPDK) is disordered. The span at 14 to 28 (ADNKNYQDYKDEPDK) shows a compositional bias: basic and acidic residues.

Belongs to the asfivirus L83L family. In terms of assembly, interacts with host IL1B.

Its subcellular location is the host cytoplasm. May subvert the host innate immune response by interacting with host IL1B and interfering with its function. The sequence is that of Protein L83L from African swine fever virus (isolate Tick/South Africa/Pretoriuskop Pr4/1996) (ASFV).